A 384-amino-acid chain; its full sequence is F-box/kelch-repeat protein At3g44120 (384 aa).

In terms of domain architecture, F-box spans 1-46 (MTLPELPKDLVEEILCFVPATSLKRLRSSCKEWNRLFKDDKRFARK). 3 Kelch repeats span residues 156 to 202 (CNKS…RECF), 264 to 314 (SVLV…FLLD), and 352 to 384 (GVQTIGGYSPIIVNYVPSLGQIELAGSKRKRDY).

The protein is F-box/kelch-repeat protein At3g44120 of Arabidopsis thaliana (Mouse-ear cress).